We begin with the raw amino-acid sequence, 194 residues long: Fe/S biogenesis protein NfuA (194 aa).

Residues Cys151 and Cys154 each contribute to the [4Fe-4S] cluster site.

It belongs to the NfuA family. Homodimer. Requires [4Fe-4S] cluster as cofactor.

Functionally, involved in iron-sulfur cluster biogenesis. Binds a 4Fe-4S cluster, can transfer this cluster to apoproteins, and thereby intervenes in the maturation of Fe/S proteins. Could also act as a scaffold/chaperone for damaged Fe/S proteins. The chain is Fe/S biogenesis protein NfuA from Vibrio vulnificus (strain CMCP6).